A 363-amino-acid chain; its full sequence is Uroporphyrinogen decarboxylase (363 aa).

Residues 36–40 (RQAGR), aspartate 85, tyrosine 160, serine 215, and histidine 339 contribute to the substrate site.

Belongs to the uroporphyrinogen decarboxylase family. In terms of assembly, homodimer.

The protein resides in the cytoplasm. It catalyses the reaction uroporphyrinogen III + 4 H(+) = coproporphyrinogen III + 4 CO2. It participates in porphyrin-containing compound metabolism; protoporphyrin-IX biosynthesis; coproporphyrinogen-III from 5-aminolevulinate: step 4/4. Its function is as follows. Catalyzes the decarboxylation of four acetate groups of uroporphyrinogen-III to yield coproporphyrinogen-III. This chain is Uroporphyrinogen decarboxylase, found in Saccharopolyspora erythraea (strain ATCC 11635 / DSM 40517 / JCM 4748 / NBRC 13426 / NCIMB 8594 / NRRL 2338).